The chain runs to 328 residues: MQSAQKSKTNGDTSLFLMKDIPQYWSPALKIGSGAFGEVMLVHSDRLDARGEQILHNEFALKVIRFPECDYHKIIREVNTHTLCRHHDNVLFIGSIYCQTFQQGLRVQMCLEYAALSDLSLLASSETFESHVAYICKNLISALIHIHNLGIVHGDLSVKNILMTHEGVVKLSDFGMANTFEQTRKSKNQSILGTPGFIAPEIINLQGYDGKADLWGLGILSLFLLKGENPFKKCTQFDLESYKVSISESFYPDYSNYSTPLQEFMSSLKDYNPEFRSSALHASSQTYLKTSCSQSEILNYYKRLRRTRGMDLPWPEEIHTFSVPVSLE.

In terms of domain architecture, Protein kinase spans 25-288 (WSPALKIGSG…ALHASSQTYL (264 aa)). Residues 31–39 (IGSGAFGEV) and Lys-62 each bind ATP. Asp-155 serves as the catalytic Proton acceptor.

This sequence belongs to the protein kinase superfamily. Tyr protein kinase family.

It catalyses the reaction L-tyrosyl-[protein] + ATP = O-phospho-L-tyrosyl-[protein] + ADP + H(+). This Caenorhabditis elegans protein is Putative tyrosine-protein kinase C03B1.5.